Consider the following 495-residue polypeptide: 3-octaprenyl-4-hydroxybenzoate carboxy-lyase (495 aa).

Asn172 contacts Mn(2+). Prenylated FMN-binding positions include 175 to 177, 189 to 191, and 194 to 195; these read IYR, RWL, and RG. Mn(2+) is bound at residue Glu238. Asp287 acts as the Proton donor in catalysis.

It belongs to the UbiD family. As to quaternary structure, homohexamer. It depends on prenylated FMN as a cofactor. Mn(2+) serves as cofactor.

It is found in the cell membrane. The enzyme catalyses a 4-hydroxy-3-(all-trans-polyprenyl)benzoate + H(+) = a 2-(all-trans-polyprenyl)phenol + CO2. It functions in the pathway cofactor biosynthesis; ubiquinone biosynthesis. In terms of biological role, catalyzes the decarboxylation of 3-octaprenyl-4-hydroxy benzoate to 2-octaprenylphenol, an intermediate step in ubiquinone biosynthesis. The chain is 3-octaprenyl-4-hydroxybenzoate carboxy-lyase from Yersinia enterocolitica serotype O:8 / biotype 1B (strain NCTC 13174 / 8081).